We begin with the raw amino-acid sequence, 453 residues long: Bifunctional protein GlmU (453 aa).

The tract at residues 1-226 (MKFSAVILAA…PIEVEGVNDR (226 aa)) is pyrophosphorylase. Residues 8 to 11 (LAAG), K22, Q73, 78 to 79 (GT), 100 to 102 (YGD), G137, E151, N166, and N224 contribute to the UDP-N-acetyl-alpha-D-glucosamine site. D102 serves as a coordination point for Mg(2+). N224 lines the Mg(2+) pocket. The linker stretch occupies residues 227-247 (AQLARLERAFQAAQAKKLLEQ). Residues 248–453 (GVMLRDPARF…TGWQRPVKKK (206 aa)) form an N-acetyltransferase region. R330 and K348 together coordinate UDP-N-acetyl-alpha-D-glucosamine. H360 functions as the Proton acceptor in the catalytic mechanism. Residues Y363 and N374 each coordinate UDP-N-acetyl-alpha-D-glucosamine. Residues A377, 383–384 (NY), S402, A420, and R437 each bind acetyl-CoA.

This sequence in the N-terminal section; belongs to the N-acetylglucosamine-1-phosphate uridyltransferase family. It in the C-terminal section; belongs to the transferase hexapeptide repeat family. In terms of assembly, homotrimer. The cofactor is Mg(2+).

Its subcellular location is the cytoplasm. The catalysed reaction is alpha-D-glucosamine 1-phosphate + acetyl-CoA = N-acetyl-alpha-D-glucosamine 1-phosphate + CoA + H(+). It catalyses the reaction N-acetyl-alpha-D-glucosamine 1-phosphate + UTP + H(+) = UDP-N-acetyl-alpha-D-glucosamine + diphosphate. Its pathway is nucleotide-sugar biosynthesis; UDP-N-acetyl-alpha-D-glucosamine biosynthesis; N-acetyl-alpha-D-glucosamine 1-phosphate from alpha-D-glucosamine 6-phosphate (route II): step 2/2. The protein operates within nucleotide-sugar biosynthesis; UDP-N-acetyl-alpha-D-glucosamine biosynthesis; UDP-N-acetyl-alpha-D-glucosamine from N-acetyl-alpha-D-glucosamine 1-phosphate: step 1/1. It functions in the pathway bacterial outer membrane biogenesis; LPS lipid A biosynthesis. Catalyzes the last two sequential reactions in the de novo biosynthetic pathway for UDP-N-acetylglucosamine (UDP-GlcNAc). The C-terminal domain catalyzes the transfer of acetyl group from acetyl coenzyme A to glucosamine-1-phosphate (GlcN-1-P) to produce N-acetylglucosamine-1-phosphate (GlcNAc-1-P), which is converted into UDP-GlcNAc by the transfer of uridine 5-monophosphate (from uridine 5-triphosphate), a reaction catalyzed by the N-terminal domain. The protein is Bifunctional protein GlmU of Vibrio vulnificus (strain YJ016).